We begin with the raw amino-acid sequence, 630 residues long: 1-deoxy-D-xylulose-5-phosphate synthase (630 aa).

Residues H80 and 121-123 (GHS) each bind thiamine diphosphate. Residue D152 coordinates Mg(2+). Residues 153–154 (GA), N181, Y288, and E370 contribute to the thiamine diphosphate site. N181 is a Mg(2+) binding site.

The protein belongs to the transketolase family. DXPS subfamily. In terms of assembly, homodimer. It depends on Mg(2+) as a cofactor. Requires thiamine diphosphate as cofactor.

The enzyme catalyses D-glyceraldehyde 3-phosphate + pyruvate + H(+) = 1-deoxy-D-xylulose 5-phosphate + CO2. Its pathway is metabolic intermediate biosynthesis; 1-deoxy-D-xylulose 5-phosphate biosynthesis; 1-deoxy-D-xylulose 5-phosphate from D-glyceraldehyde 3-phosphate and pyruvate: step 1/1. In terms of biological role, catalyzes the acyloin condensation reaction between C atoms 2 and 3 of pyruvate and glyceraldehyde 3-phosphate to yield 1-deoxy-D-xylulose-5-phosphate (DXP). This is 1-deoxy-D-xylulose-5-phosphate synthase from Colwellia psychrerythraea (strain 34H / ATCC BAA-681) (Vibrio psychroerythus).